The chain runs to 176 residues: Dual specificity phosphatase 28 (176 aa).

Residues 17–159 (PPLVRVAPSL…LQKYEEALQA (143 aa)) form the Tyrosine-protein phosphatase domain. Cysteine 103 acts as the Phosphocysteine intermediate in catalysis.

It belongs to the protein-tyrosine phosphatase family. Non-receptor class dual specificity subfamily. In terms of assembly, monomer.

It catalyses the reaction O-phospho-L-tyrosyl-[protein] + H2O = L-tyrosyl-[protein] + phosphate. The catalysed reaction is O-phospho-L-seryl-[protein] + H2O = L-seryl-[protein] + phosphate. It carries out the reaction O-phospho-L-threonyl-[protein] + H2O = L-threonyl-[protein] + phosphate. In terms of biological role, has phosphatase activity with the synthetic substrate 6,8-difluoro-4-methylumbelliferyl phosphate (in vitro). Has almost no detectable activity with phosphotyrosine, even less activity with phosphothreonine and displays complete lack of activity with phosphoserine. The poor activity with phosphotyrosine may be due to steric hindrance by bulky amino acid sidechains that obstruct access to the active site. The chain is Dual specificity phosphatase 28 (DUSP28) from Homo sapiens (Human).